The primary structure comprises 206 residues: MARYLGPKLKLSRREGTDLFLKSGVRAIDSKCKIDTAPGQHGARKPRLSDYGSQLREKQKVRRIYGILERQFRNYYKEANRLKGNTGENLLVLLEGRLDNVVYRMGFAATRAEARQLVSHKAIVVNGRVVNIPSFQVSVNDVVAIREKSKKQARIKASLELAEQREKPTWLEVDSAKMEGVFKRVPERSDLSADINEHLIVELYSK.

The S4 RNA-binding domain maps to 96 to 156 (GRLDNVVYRM…EKSKKQARIK (61 aa)).

Belongs to the universal ribosomal protein uS4 family. As to quaternary structure, part of the 30S ribosomal subunit. Contacts protein S5. The interaction surface between S4 and S5 is involved in control of translational fidelity.

Its function is as follows. One of the primary rRNA binding proteins, it binds directly to 16S rRNA where it nucleates assembly of the body of the 30S subunit. Functionally, with S5 and S12 plays an important role in translational accuracy. This Haemophilus influenzae (strain 86-028NP) protein is Small ribosomal subunit protein uS4.